The following is a 168-amino-acid chain: Crossover junction endodeoxyribonuclease RuvC (168 aa).

Residues Asp-8, Glu-68, and Asp-140 contribute to the active site. The Mg(2+) site is built by Asp-8, Glu-68, and Asp-140.

It belongs to the RuvC family. In terms of assembly, homodimer which binds Holliday junction (HJ) DNA. The HJ becomes 2-fold symmetrical on binding to RuvC with unstacked arms; it has a different conformation from HJ DNA in complex with RuvA. In the full resolvosome a probable DNA-RuvA(4)-RuvB(12)-RuvC(2) complex forms which resolves the HJ. Mg(2+) serves as cofactor.

The protein resides in the cytoplasm. It carries out the reaction Endonucleolytic cleavage at a junction such as a reciprocal single-stranded crossover between two homologous DNA duplexes (Holliday junction).. The RuvA-RuvB-RuvC complex processes Holliday junction (HJ) DNA during genetic recombination and DNA repair. Endonuclease that resolves HJ intermediates. Cleaves cruciform DNA by making single-stranded nicks across the HJ at symmetrical positions within the homologous arms, yielding a 5'-phosphate and a 3'-hydroxyl group; requires a central core of homology in the junction. The consensus cleavage sequence is 5'-(A/T)TT(C/G)-3'. Cleavage occurs on the 3'-side of the TT dinucleotide at the point of strand exchange. HJ branch migration catalyzed by RuvA-RuvB allows RuvC to scan DNA until it finds its consensus sequence, where it cleaves and resolves the cruciform DNA. In Gluconacetobacter diazotrophicus (strain ATCC 49037 / DSM 5601 / CCUG 37298 / CIP 103539 / LMG 7603 / PAl5), this protein is Crossover junction endodeoxyribonuclease RuvC.